Here is a 248-residue protein sequence, read N- to C-terminus: Ubiquinone/menaquinone biosynthesis C-methyltransferase UbiE (248 aa).

Positions 68 and 92 each coordinate S-adenosyl-L-methionine.

This sequence belongs to the class I-like SAM-binding methyltransferase superfamily. MenG/UbiE family.

It catalyses the reaction a 2-demethylmenaquinol + S-adenosyl-L-methionine = a menaquinol + S-adenosyl-L-homocysteine + H(+). The enzyme catalyses a 2-methoxy-6-(all-trans-polyprenyl)benzene-1,4-diol + S-adenosyl-L-methionine = a 5-methoxy-2-methyl-3-(all-trans-polyprenyl)benzene-1,4-diol + S-adenosyl-L-homocysteine + H(+). It functions in the pathway quinol/quinone metabolism; menaquinone biosynthesis; menaquinol from 1,4-dihydroxy-2-naphthoate: step 2/2. It participates in cofactor biosynthesis; ubiquinone biosynthesis. Functionally, methyltransferase required for the conversion of demethylmenaquinol (DMKH2) to menaquinol (MKH2) and the conversion of 2-polyprenyl-6-methoxy-1,4-benzoquinol (DDMQH2) to 2-polyprenyl-3-methyl-6-methoxy-1,4-benzoquinol (DMQH2). This is Ubiquinone/menaquinone biosynthesis C-methyltransferase UbiE from Rickettsia akari (strain Hartford).